A 255-amino-acid polypeptide reads, in one-letter code: tRNA (guanine-N(1)-)-methyltransferase (255 aa).

S-adenosyl-L-methionine-binding positions include G113 and I133–L138.

This sequence belongs to the RNA methyltransferase TrmD family. Homodimer.

The protein localises to the cytoplasm. The enzyme catalyses guanosine(37) in tRNA + S-adenosyl-L-methionine = N(1)-methylguanosine(37) in tRNA + S-adenosyl-L-homocysteine + H(+). Its function is as follows. Specifically methylates guanosine-37 in various tRNAs. In Salmonella choleraesuis (strain SC-B67), this protein is tRNA (guanine-N(1)-)-methyltransferase.